Consider the following 169-residue polypeptide: MSKATKRKHVVKEVLGDYVQPTEHQSIVKVLGSPGNNLHEVETAEGERFLASMPTKFRKNIWIKRGDFLIVDPIVEGEKVKAEIAFILYKDHQRLLQKEGLWPEGFTQDKTGLVAKEKESSGIQSTEAQAKPQGEDSETDDDSGLFVNTNHVHYEDSEEESESEEDEEN.

Positions 14–89 constitute an S1-like domain; the sequence is VLGDYVQPTE…VKAEIAFILY (76 aa). Residues 115-169 are disordered; it reads AKEKESSGIQSTEAQAKPQGEDSETDDDSGLFVNTNHVHYEDSEEESESEEDEEN. Residues 156–169 are compositionally biased toward acidic residues; it reads DSEEESESEEDEEN.

It belongs to the EIF1AD family.

The protein localises to the nucleus. Its function is as follows. May play a role into cellular response to oxidative stress. May decrease cell proliferation. The chain is Probable RNA-binding protein EIF1AD (eif1ad) from Xenopus laevis (African clawed frog).